The following is a 178-amino-acid chain: Fatty-acid and retinol-binding protein 1 (178 aa).

The N-terminal stretch at 1-16 (MYHQLILMALIGVIMA) is a signal peptide. N44 and N75 each carry an N-linked (GlcNAc...) asparagine glycan. Coiled coils occupy residues 67 to 89 (DAALEALKNTSDKLYQKAVELRN) and 122 to 154 (QKLDMEKLKQAARDIIAKYEALNEETREELKAT). N-linked (GlcNAc...) asparagine glycosylation is present at N157.

Belongs to the fatty-acid and retinol-binding protein (FARBP) family. N-glycosylated.

Its subcellular location is the secreted. In terms of biological role, binds retinol and different fatty acids. This is Fatty-acid and retinol-binding protein 1 from Onchocerca dukei (Filarial nematode worm).